The chain runs to 368 residues: Biotin synthase (368 aa).

Positions 46–277 (VHGDEVALCG…AAHIFVMGGR (232 aa)) constitute a Radical SAM core domain. [4Fe-4S] cluster-binding residues include cysteine 64, cysteine 68, and cysteine 71. [2Fe-2S] cluster contacts are provided by serine 109, cysteine 142, and cysteine 202. The disordered stretch occupies residues 347–368 (RAAEPGGKRGLPVVGPPRGGCA).

The protein belongs to the radical SAM superfamily. Biotin synthase family. As to quaternary structure, homodimer. [4Fe-4S] cluster is required as a cofactor. [2Fe-2S] cluster serves as cofactor.

It carries out the reaction (4R,5S)-dethiobiotin + (sulfur carrier)-SH + 2 reduced [2Fe-2S]-[ferredoxin] + 2 S-adenosyl-L-methionine = (sulfur carrier)-H + biotin + 2 5'-deoxyadenosine + 2 L-methionine + 2 oxidized [2Fe-2S]-[ferredoxin]. Its pathway is cofactor biosynthesis; biotin biosynthesis; biotin from 7,8-diaminononanoate: step 2/2. Functionally, catalyzes the conversion of dethiobiotin (DTB) to biotin by the insertion of a sulfur atom into dethiobiotin via a radical-based mechanism. In Anaeromyxobacter sp. (strain Fw109-5), this protein is Biotin synthase.